Consider the following 112-residue polypeptide: Probable small nuclear ribonucleoprotein Sm D2 (112 aa).

Residues 1-15 are compositionally biased toward basic and acidic residues; that stretch reads MSRMNDETMEDKPDD. Residues 1–23 are disordered; that stretch reads MSRMNDETMEDKPDDSNGPLSIL. One can recognise a Sm domain in the interval 20 to 106; the sequence is LSILMDSVNN…VILVLKNPLG (87 aa).

The protein belongs to the snRNP core protein family.

It is found in the nucleus. The protein resides in the cytoplasm. It localises to the cytosol. In terms of biological role, plays a role in pre-mRNA splicing as a core component of the spliceosomal U1, U2, U4 and U5 small nuclear ribonucleoproteins (snRNPs), the building blocks of the spliceosome. This Dictyostelium discoideum (Social amoeba) protein is Probable small nuclear ribonucleoprotein Sm D2 (snrpd2).